Reading from the N-terminus, the 73-residue chain is Protein SlyX homolog (73 aa).

The protein belongs to the SlyX family.

In Histophilus somni (strain 2336) (Haemophilus somnus), this protein is Protein SlyX homolog.